The sequence spans 222 residues: MNVGSNEEAETLRHLFGVRWPLVVRYVEWLSTAGLERGLIGPAEVDRLWERHIANCAALAPLIPVDQRVIDVGSGAGLPGIVLALARPDLEVLLIEAMSRRTAFLREVVADLGLRDVTVENSRAENVACTAPVVTARAVAPLPRLVKNVAHLLEPGGVLLALKGARVWQEVHAAEHLLAKLGYQPGVEVLTVRAVAGQLTVQRDADASNDRRWATVVRVIKQ.

Residues Gly-73, Leu-78, Ala-124–Glu-125, and Arg-137 each bind S-adenosyl-L-methionine.

This sequence belongs to the methyltransferase superfamily. RNA methyltransferase RsmG family.

It localises to the cytoplasm. Specifically methylates the N7 position of guanine in position 518 of 16S rRNA. The polypeptide is Ribosomal RNA small subunit methyltransferase G (Acidothermus cellulolyticus (strain ATCC 43068 / DSM 8971 / 11B)).